A 153-amino-acid chain; its full sequence is 3-hydroxyacyl-[acyl-carrier-protein] dehydratase FabZ (153 aa).

Histidine 52 is a catalytic residue.

The protein belongs to the thioester dehydratase family. FabZ subfamily.

The protein resides in the cytoplasm. It catalyses the reaction a (3R)-hydroxyacyl-[ACP] = a (2E)-enoyl-[ACP] + H2O. Involved in unsaturated fatty acids biosynthesis. Catalyzes the dehydration of short chain beta-hydroxyacyl-ACPs and long chain saturated and unsaturated beta-hydroxyacyl-ACPs. This is 3-hydroxyacyl-[acyl-carrier-protein] dehydratase FabZ from Magnetococcus marinus (strain ATCC BAA-1437 / JCM 17883 / MC-1).